Reading from the N-terminus, the 315-residue chain is MLEIEKPKIECVENAEDGSYGKFVIEPLERGYGITLGNALRRILLSSLPGVAADHIKIDSVLHEFSTVQGVKEDVTELILNIKCLALTMNGEGPKTIYIDEVGPKEVTAADIKTDGDVEVINKDLHIATLDENGKMYMEINVNRGRGYVTQNKNKTKDMPIGSIAVDSIYTPVKRVNFSVENTRVGQITDYDKLTIEVWTNGTIRPEEAVSLSAKILIEHFKLFMTLTDHADDMEIMVEKEEDKKEKVLEMTIEELDLSVRSYNCLKRAGINTVQELCERSMDDMMKVRNLGKKSLEEVEQKLEALGLGLRKSED.

The alpha N-terminal domain (alpha-NTD) stretch occupies residues 1 to 228; it reads MLEIEKPKIE…EHFKLFMTLT (228 aa). Residues 245-315 form an alpha C-terminal domain (alpha-CTD) region; that stretch reads KEKVLEMTIE…LGLGLRKSED (71 aa).

The protein belongs to the RNA polymerase alpha chain family. As to quaternary structure, homodimer. The RNAP catalytic core consists of 2 alpha, 1 beta, 1 beta' and 1 omega subunit. When a sigma factor is associated with the core the holoenzyme is formed, which can initiate transcription.

It catalyses the reaction RNA(n) + a ribonucleoside 5'-triphosphate = RNA(n+1) + diphosphate. DNA-dependent RNA polymerase catalyzes the transcription of DNA into RNA using the four ribonucleoside triphosphates as substrates. This Clostridium botulinum (strain Langeland / NCTC 10281 / Type F) protein is DNA-directed RNA polymerase subunit alpha.